The chain runs to 371 residues: N-methyl-L-tryptophan oxidase (371 aa).

4-34 (DLIVIGSGSVGSAAGYYASQAGLNVLMIDSA) contributes to the FAD binding site. Cys307 bears the S-8alpha-FAD cysteine mark.

This sequence belongs to the MSOX/MTOX family. MTOX subfamily. As to quaternary structure, monomer. Requires FAD as cofactor.

The catalysed reaction is N(alpha)-methyl-L-tryptophan + O2 + H2O = L-tryptophan + formaldehyde + H2O2. Its function is as follows. Catalyzes the oxidative demethylation of N-methyl-L-tryptophan. This Yersinia pseudotuberculosis serotype O:1b (strain IP 31758) protein is N-methyl-L-tryptophan oxidase.